The primary structure comprises 418 residues: Light-independent protochlorophyllide reductase subunit N (418 aa).

3 residues coordinate [4Fe-4S] cluster: Cys17, Cys42, and Cys103.

This sequence belongs to the BchN/ChlN family. Protochlorophyllide reductase is composed of three subunits; ChlL, ChlN and ChlB. Forms a heterotetramer of two ChlB and two ChlN subunits. [4Fe-4S] cluster is required as a cofactor.

The catalysed reaction is chlorophyllide a + oxidized 2[4Fe-4S]-[ferredoxin] + 2 ADP + 2 phosphate = protochlorophyllide a + reduced 2[4Fe-4S]-[ferredoxin] + 2 ATP + 2 H2O. It participates in porphyrin-containing compound metabolism; chlorophyll biosynthesis (light-independent). Component of the dark-operative protochlorophyllide reductase (DPOR) that uses Mg-ATP and reduced ferredoxin to reduce ring D of protochlorophyllide (Pchlide) to form chlorophyllide a (Chlide). This reaction is light-independent. The NB-protein (ChlN-ChlB) is the catalytic component of the complex. The chain is Light-independent protochlorophyllide reductase subunit N from Prochlorococcus marinus (strain MIT 9312).